A 109-amino-acid chain; its full sequence is Phosphoribosyl-AMP cyclohydrolase (109 aa).

Residue D80 participates in Mg(2+) binding. C81 serves as a coordination point for Zn(2+). Mg(2+)-binding residues include D82 and D84. The Zn(2+) site is built by C97 and C104.

This sequence belongs to the PRA-CH family. Homodimer. Mg(2+) serves as cofactor. The cofactor is Zn(2+).

The protein resides in the cytoplasm. The catalysed reaction is 1-(5-phospho-beta-D-ribosyl)-5'-AMP + H2O = 1-(5-phospho-beta-D-ribosyl)-5-[(5-phospho-beta-D-ribosylamino)methylideneamino]imidazole-4-carboxamide. It functions in the pathway amino-acid biosynthesis; L-histidine biosynthesis; L-histidine from 5-phospho-alpha-D-ribose 1-diphosphate: step 3/9. Catalyzes the hydrolysis of the adenine ring of phosphoribosyl-AMP. This Clostridium botulinum (strain Alaska E43 / Type E3) protein is Phosphoribosyl-AMP cyclohydrolase.